Reading from the N-terminus, the 258-residue chain is C1q-related factor (258 aa).

The signal sequence occupies residues 1-16 (MLLVLVVLIPVLVSSG). The disordered stretch occupies residues 39–120 (GPGAGARSDG…PGSGGSGAIS (82 aa)). The span at 67 to 77 (GPQGKPGRTGK) shows a compositional bias: low complexity. The region spanning 67–115 (GPQGKPGRTGKPGPPGPPGDRGPPGPVGPPGEKGEPGKPGPPGLPGSGG) is the Collagen-like domain. The segment covering 78 to 95 (PGPPGPPGDRGPPGPVGP) has biased composition (pro residues). The 134-residue stretch at 125-258 (TTVPRVAFYA…TFSGFIIYSD (134 aa)) folds into the C1q domain.

In terms of assembly, interacts with ADGRB3. Forms heterooligomers with C1QL4, when proteins are coexpressed; this interaction does not occur after secretion. In terms of tissue distribution, expressed in brainstem. More abundant in areas of the nervous system involved in motor function, such as the Purkinje cells of the cerebellum, the accessory olivary nucleus, the pons and the red nucleus.

It is found in the secreted. May regulate the number of excitatory synapses that are formed on hippocampus neurons. Has no effect on inhibitory synapses. The chain is C1q-related factor (C1ql1) from Mus musculus (Mouse).